A 510-amino-acid chain; its full sequence is Nectin-4 (510 aa).

The first 31 residues, 1–31, serve as a signal peptide directing secretion; sequence MPLSLGAEMWGPAAWLLLLLLLASFTGQRLA. The region spanning 32–144 is the Ig-like V-type domain; it reads GELETSDLVT…GSFQARLRLR (113 aa). At 32–349 the chain is on the extracellular side; that stretch reads GELETSDLVT…GKQVDLVSAS (318 aa). 3 disulfides stabilise this stretch: cysteine 52/cysteine 127, cysteine 171/cysteine 223, and cysteine 270/cysteine 315. Ig-like C2-type domains lie at 148–237 and 248–331; these read PPLP…QRIT and ASVR…VVVD. A glycan (N-linked (GlcNAc...) asparagine) is linked at asparagine 281. A helical membrane pass occupies residues 350–370; the sequence is VVVVGVIAALLFCLLVVVVVL. At 371-510 the chain is on the cytoplasmic side; sequence MSRYHRRKAQ…IYINGRGHLV (140 aa). Residues 400 to 412 are compositionally biased toward basic and acidic residues; sequence RLHSHHSDPRNQP. Positions 400–475 are disordered; it reads RLHSHHSDPR…GRAEEEEDRD (76 aa).

The protein belongs to the nectin family. In terms of assembly, self-associates. Interacts via its Ig-like V-type domain with NECTIN1 Ig-like V-type domain. Interacts via its C-terminus with AFDN. Interacts with TIGIT.

It is found in the cell membrane. The protein resides in the cell junction. The protein localises to the adherens junction. Functionally, seems to be involved in cell adhesion through trans-homophilic and -heterophilic interactions, the latter including specifically interactions with NECTIN1. Plays a role in the senescence-associated cell size enlargement via SFK/PI3K/Rac1 and thus promotes senescent cell survival. Also participates in the innate immune response by acting as a ligand for the receptor TIGIT to inhibit NK-cell activity. The sequence is that of Nectin-4 from Bos taurus (Bovine).